The primary structure comprises 215 residues: ATP phosphoribosyltransferase (215 aa).

The protein belongs to the ATP phosphoribosyltransferase family. Short subfamily. Heteromultimer composed of HisG and HisZ subunits.

The protein resides in the cytoplasm. It catalyses the reaction 1-(5-phospho-beta-D-ribosyl)-ATP + diphosphate = 5-phospho-alpha-D-ribose 1-diphosphate + ATP. It participates in amino-acid biosynthesis; L-histidine biosynthesis; L-histidine from 5-phospho-alpha-D-ribose 1-diphosphate: step 1/9. Its function is as follows. Catalyzes the condensation of ATP and 5-phosphoribose 1-diphosphate to form N'-(5'-phosphoribosyl)-ATP (PR-ATP). Has a crucial role in the pathway because the rate of histidine biosynthesis seems to be controlled primarily by regulation of HisG enzymatic activity. In Prochlorococcus marinus subsp. pastoris (strain CCMP1986 / NIES-2087 / MED4), this protein is ATP phosphoribosyltransferase.